The following is a 409-amino-acid chain: LL-diaminopimelate aminotransferase (409 aa).

Positions 15 and 42 each coordinate substrate. Residues Tyr72, 108-109 (AK), Tyr132, Asn186, Tyr217, and 245-247 (SFS) each bind pyridoxal 5'-phosphate. 3 residues coordinate substrate: Lys109, Tyr132, and Asn186. N6-(pyridoxal phosphate)lysine is present on Lys248. 2 residues coordinate pyridoxal 5'-phosphate: Arg256 and Asn291. Substrate-binding residues include Asn291 and Arg385.

The protein belongs to the class-I pyridoxal-phosphate-dependent aminotransferase family. LL-diaminopimelate aminotransferase subfamily. As to quaternary structure, homodimer. The cofactor is pyridoxal 5'-phosphate.

The enzyme catalyses (2S,6S)-2,6-diaminopimelate + 2-oxoglutarate = (S)-2,3,4,5-tetrahydrodipicolinate + L-glutamate + H2O + H(+). It participates in amino-acid biosynthesis; L-lysine biosynthesis via DAP pathway; LL-2,6-diaminopimelate from (S)-tetrahydrodipicolinate (aminotransferase route): step 1/1. Functionally, involved in the synthesis of meso-diaminopimelate (m-DAP or DL-DAP), required for both lysine and peptidoglycan biosynthesis. Catalyzes the direct conversion of tetrahydrodipicolinate to LL-diaminopimelate. In Desulfosudis oleivorans (strain DSM 6200 / JCM 39069 / Hxd3) (Desulfococcus oleovorans), this protein is LL-diaminopimelate aminotransferase.